Reading from the N-terminus, the 314-residue chain is Malate dehydrogenase (314 aa).

NAD(+) is bound by residues 7–12 (GAGNVG) and D32. The substrate site is built by R81 and R87. Residues N94 and 117-119 (VAN) contribute to the NAD(+) site. The substrate site is built by N119 and R150. H174 (proton acceptor) is an active-site residue.

This sequence belongs to the LDH/MDH superfamily. MDH type 3 family.

The catalysed reaction is (S)-malate + NAD(+) = oxaloacetate + NADH + H(+). In terms of biological role, catalyzes the reversible oxidation of malate to oxaloacetate. This Salinibacter ruber (strain DSM 13855 / M31) protein is Malate dehydrogenase.